The chain runs to 380 residues: Glucose-1-phosphate adenylyltransferase (380 aa).

Alpha-D-glucose 1-phosphate contacts are provided by residues Gly-164, 179-180 (EK), and Ser-190.

The protein belongs to the bacterial/plant glucose-1-phosphate adenylyltransferase family. As to quaternary structure, homotetramer.

The catalysed reaction is alpha-D-glucose 1-phosphate + ATP + H(+) = ADP-alpha-D-glucose + diphosphate. Its pathway is glycan biosynthesis; glycogen biosynthesis. In terms of biological role, involved in the biosynthesis of ADP-glucose, a building block required for the elongation reactions to produce glycogen. Catalyzes the reaction between ATP and alpha-D-glucose 1-phosphate (G1P) to produce pyrophosphate and ADP-Glc. The chain is Glucose-1-phosphate adenylyltransferase from Streptococcus gordonii (strain Challis / ATCC 35105 / BCRC 15272 / CH1 / DL1 / V288).